A 600-amino-acid polypeptide reads, in one-letter code: Methylenetetrahydrofolate reductase 2 (600 aa).

Glu-22 functions as the Proton donor/acceptor in the catalytic mechanism. Residues 22 to 27 and 54 to 55 contribute to the NAD(+) site; these read EYFVPK and TW. FAD is bound by residues 54-55, His-84, 114-116, 133-134, Tyr-156, Asp-171, and Lys-178; these read TW, RGD, and YA. Asp-116 contributes to the substrate binding site. Substrate contacts are provided by Gln-189 and Tyr-282.

The protein belongs to the methylenetetrahydrofolate reductase family. The cofactor is FAD.

It carries out the reaction (6S)-5-methyl-5,6,7,8-tetrahydrofolate + NADP(+) = (6R)-5,10-methylene-5,6,7,8-tetrahydrofolate + NADPH + H(+). It functions in the pathway one-carbon metabolism; tetrahydrofolate interconversion. This is Methylenetetrahydrofolate reductase 2 (MET13) from Saccharomyces cerevisiae (strain ATCC 204508 / S288c) (Baker's yeast).